The chain runs to 466 residues: Adenosylhomocysteinase (466 aa).

3 residues coordinate substrate: threonine 57, aspartate 132, and glutamate 192. 193-195 provides a ligand contact to NAD(+); sequence TTT. Residues lysine 222 and aspartate 226 each contribute to the substrate site. NAD(+) is bound by residues asparagine 227, 256-261, glutamate 279, asparagine 314, 335-337, and asparagine 380; these read GYGDVG and IGH.

Belongs to the adenosylhomocysteinase family. Requires NAD(+) as cofactor.

Its subcellular location is the cytoplasm. The enzyme catalyses S-adenosyl-L-homocysteine + H2O = L-homocysteine + adenosine. Its pathway is amino-acid biosynthesis; L-homocysteine biosynthesis; L-homocysteine from S-adenosyl-L-homocysteine: step 1/1. Functionally, may play a key role in the regulation of the intracellular concentration of adenosylhomocysteine. This Rhizobium leguminosarum bv. trifolii (strain WSM2304) protein is Adenosylhomocysteinase.